Reading from the N-terminus, the 806-residue chain is Leucine--tRNA ligase (806 aa).

The 'HIGH' region motif lies at 40 to 51 (PYPSGTGLHVGH). Positions 576–580 (KMSKS) match the 'KMSKS' region motif. Lys-579 provides a ligand contact to ATP.

Belongs to the class-I aminoacyl-tRNA synthetase family.

It localises to the cytoplasm. The catalysed reaction is tRNA(Leu) + L-leucine + ATP = L-leucyl-tRNA(Leu) + AMP + diphosphate. In Prosthecochloris aestuarii (strain DSM 271 / SK 413), this protein is Leucine--tRNA ligase.